Here is a 1149-residue protein sequence, read N- to C-terminus: FH2 domain-containing protein 1 (1149 aa).

Disordered stretches follow at residues 18-79 (LATA…PPPG), 464-540 (NHDR…SRLS), 554-660 (ESAT…PLLP), and 681-1149 (SPKS…PLQK). Pro residues-rich tracts occupy residues 33 to 48 (ASPPPPPPPPPPPPCP) and 56 to 79 (PSPPPPLPPPLPGGPPIPPPPPPG). An FH2 domain is found at 88 to 483 (GYSSLGKKKR…QLQRQKEMEQ (396 aa)). The span at 464 to 485 (NHDREEQERKQLQRQKEMEQKR) shows a compositional bias: basic and acidic residues. Positions 486–504 (YSWSTGELGSFGRSSSEND) are enriched in polar residues. Ser-501 is modified (phosphoserine). The segment covering 522-532 (PRPNSPSYRPP) has biased composition (low complexity). 2 stretches are compositionally biased toward polar residues: residues 554–575 (ESATSSPEDPNKFNSLPRSSPR) and 591–604 (SHGPNFTHEPQASK). 2 positions are modified to phosphoserine: Ser-645 and Ser-655. Over residues 681–693 (SPKSLEEGSQLTL) the composition is skewed to polar residues. A compositionally biased stretch (basic and acidic residues) spans 784 to 795 (MDSRAGGDKQEE). Positions 801–822 (GSVSSGAGEAGSSQVSSNSVSS) are enriched in low complexity. Residues 844–856 (PKDRPSRGKDAIA) are compositionally biased toward basic and acidic residues. The segment covering 926–947 (ETPSSTDTPLSRRSSVRGTSDT) has biased composition (polar residues). The interval 960 to 1086 (EEPRLPRSSG…VKGGSEDSAS (127 aa)) is MTBD; microtubule-binding domain. Low complexity predominate over residues 965-974 (PRSSGSISGR). Polar residues-rich tracts occupy residues 1042–1052 (ARNTVASSSRS) and 1064–1074 (TGLTRTVSQRQ). Basic and acidic residues predominate over residues 1123-1134 (GTTERSSLRLKD).

As to quaternary structure, interacts with CEP170. As to expression, brain, heart and lung (at protein level).

The protein resides in the golgi apparatus. The protein localises to the cell projection. It is found in the cilium. Its function is as follows. Microtubule-associated formin which regulates both actin and microtubule dynamics. Induces microtubule acetylation and stabilization and actin stress fiber formation. Regulates Golgi ribbon formation. Required for normal cilia assembly. Early in cilia assembly, may assist in the maturation and positioning of the centrosome/basal body, and once cilia assembly has initiated, may also promote cilia elongation by inhibiting disassembly. The protein is FH2 domain-containing protein 1 (Fhdc1) of Mus musculus (Mouse).